Consider the following 81-residue polypeptide: Photosystem I iron-sulfur center (81 aa).

4Fe-4S ferredoxin-type domains are found at residues 2-31 and 39-68; these read SHAV…MVPW and IASS…IRVY. [4Fe-4S] cluster-binding residues include Cys-11, Cys-14, Cys-17, Cys-21, Cys-48, Cys-51, Cys-54, and Cys-58.

The cyanobacterial PSI reaction center is composed of one copy each of PsaA,B,C,D,E,F,I,J,K,L,M and X, and forms trimeric complexes. Requires [4Fe-4S] cluster as cofactor.

It is found in the cellular thylakoid membrane. It catalyses the reaction reduced [plastocyanin] + hnu + oxidized [2Fe-2S]-[ferredoxin] = oxidized [plastocyanin] + reduced [2Fe-2S]-[ferredoxin]. Functionally, apoprotein for the two 4Fe-4S centers FA and FB of photosystem I (PSI); essential for photochemical activity. FB is the terminal electron acceptor of PSI, donating electrons to ferredoxin. The C-terminus interacts with PsaA/B/D and helps assemble the protein into the PSI complex. Required for binding of PsaD and PsaE to PSI. PSI is a plastocyanin/cytochrome c6-ferredoxin oxidoreductase, converting photonic excitation into a charge separation, which transfers an electron from the donor P700 chlorophyll pair to the spectroscopically characterized acceptors A0, A1, FX, FA and FB in turn. The sequence is that of Photosystem I iron-sulfur center from Prochlorococcus marinus (strain MIT 9312).